A 530-amino-acid chain; its full sequence is Membrane-bound lytic murein transglycosylase F (530 aa).

An N-terminal signal peptide occupies residues 1 to 27 (MTPFAYKLPIRALWLGLLSLLLVGCQI). The segment at 28–279 (DSEPKSELEK…SLEEKYIGHI (252 aa)) is non-LT domain. The LT domain stretch occupies residues 280 to 530 (GAFDYVDTRA…SAKPSTESKN (251 aa)). The active site involves E324. The interval 505-530 (ALESESLENSESSAEPSAKPSTESKN) is disordered. The segment covering 513 to 530 (NSESSAEPSAKPSTESKN) has biased composition (low complexity).

The protein in the N-terminal section; belongs to the bacterial solute-binding protein 3 family. In the C-terminal section; belongs to the transglycosylase Slt family.

The protein localises to the cell outer membrane. It carries out the reaction Exolytic cleavage of the (1-&gt;4)-beta-glycosidic linkage between N-acetylmuramic acid (MurNAc) and N-acetylglucosamine (GlcNAc) residues in peptidoglycan, from either the reducing or the non-reducing ends of the peptidoglycan chains, with concomitant formation of a 1,6-anhydrobond in the MurNAc residue.. Functionally, murein-degrading enzyme that degrades murein glycan strands and insoluble, high-molecular weight murein sacculi, with the concomitant formation of a 1,6-anhydromuramoyl product. Lytic transglycosylases (LTs) play an integral role in the metabolism of the peptidoglycan (PG) sacculus. Their lytic action creates space within the PG sacculus to allow for its expansion as well as for the insertion of various structures such as secretion systems and flagella. In Vibrio cholerae serotype O1 (strain ATCC 39541 / Classical Ogawa 395 / O395), this protein is Membrane-bound lytic murein transglycosylase F.